Consider the following 399-residue polypeptide: Galactokinase (399 aa).

42 to 45 (EHTD) is a substrate binding site. Residues S76 and 133 to 139 (ASGLSSS) contribute to the ATP site. 2 residues coordinate Mg(2+): S139 and E171. The active-site Proton acceptor is the D183. Y233 serves as a coordination point for substrate.

Belongs to the GHMP kinase family. GalK subfamily. As to quaternary structure, monomer.

The protein localises to the cytoplasm. The catalysed reaction is alpha-D-galactose + ATP = alpha-D-galactose 1-phosphate + ADP + H(+). It participates in carbohydrate metabolism; galactose metabolism. In terms of biological role, catalyzes the transfer of the gamma-phosphate of ATP to D-galactose to form alpha-D-galactose-1-phosphate (Gal-1-P). This Lactococcus lactis subsp. lactis (strain IL1403) (Streptococcus lactis) protein is Galactokinase.